The primary structure comprises 325 residues: Protein FAM50B (325 aa).

Position 2 is an N-acetylalanine (alanine 2). Positions 137–160 (RRAGNLGKNPDVDTSFLPDRDREE) are disordered.

Belongs to the FAM50 family.

This is Protein FAM50B (FAM50B) from Macaca fascicularis (Crab-eating macaque).